The following is a 102-amino-acid chain: Small ribosomal subunit protein uS10 (102 aa).

This sequence belongs to the universal ribosomal protein uS10 family. As to quaternary structure, part of the 30S ribosomal subunit.

Its function is as follows. Involved in the binding of tRNA to the ribosomes. The chain is Small ribosomal subunit protein uS10 from Cenarchaeum symbiosum (strain A).